The primary structure comprises 198 residues: Peroxiredoxin-2 (198 aa).

Residue A2 is modified to N-acetylalanine. The Thioredoxin domain maps to 6–164 (AHIGKPAPDF…ALRLVQAFQY (159 aa)). C51 serves as the catalytic Cysteine sulfenic acid (-SOH) intermediate. S112 is subject to Phosphoserine. T182 carries the phosphothreonine modification. K196 carries the post-translational modification N6-acetyllysine.

The protein belongs to the peroxiredoxin family. AhpC/Prx1 subfamily. Homodimer; disulfide-linked, upon oxidation. 5 homodimers assemble to form a ring-like decamer. Interacts with TIPIN. In terms of processing, the enzyme can be inactivated by further oxidation of the cysteine sulfenic acid (C(P)-SOH) to sulphinic acid (C(P)-SO2H) instead of its condensation to a disulfide bond. It can be reactivated by forming a transient disulfide bond with sulfiredoxin SRXN1, which reduces the cysteine sulfinic acid in an ATP- and Mg-dependent manner. Acetylation increases resistance to transition to high molecular-mass complexes. Deacetylated by HDAC6 which decreases reducing activity.

The protein localises to the cytoplasm. The enzyme catalyses a hydroperoxide + [thioredoxin]-dithiol = an alcohol + [thioredoxin]-disulfide + H2O. Thiol-specific peroxidase that catalyzes the reduction of hydrogen peroxide and organic hydroperoxides to water and alcohols, respectively. Plays a role in cell protection against oxidative stress by detoxifying peroxides and as sensor of hydrogen peroxide-mediated signaling events. Might participate in the signaling cascades of growth factors and tumor necrosis factor-alpha by regulating the intracellular concentrations of H(2)O(2). The sequence is that of Peroxiredoxin-2 (PRDX2) from Cricetulus griseus (Chinese hamster).